The primary structure comprises 100 residues: uncharacterized protein (100 aa).

This is an uncharacterized protein from Archaeoglobus fulgidus (strain ATCC 49558 / DSM 4304 / JCM 9628 / NBRC 100126 / VC-16).